The chain runs to 507 residues: Phytoene dehydrogenase (507 aa).

12-45 (VVVGAGLAGLAAALHLLGAGRRVTVVEREDVPGG) provides a ligand contact to FAD.

The protein belongs to the carotenoid/retinoid oxidoreductase family. FAD is required as a cofactor.

Its pathway is carotenoid biosynthesis; lycopene biosynthesis. Its function is as follows. This enzyme converts phytoene into zeta-carotene via the intermediary of phytofluene by the symmetrical introduction of two double bonds at the C-11 and C-11' positions of phytoene. The sequence is that of Phytoene dehydrogenase (crtI) from Streptomyces griseus.